The following is a 151-amino-acid chain: uncharacterized protein (151 aa).

Positions 1–151 (MAELASIIRP…SSKTTTLKAR (151 aa)) are disordered. Positions 33–45 (STGLSDLLMLLQS) are enriched in low complexity. A compositionally biased stretch (basic residues) spans 53-64 (RARRRTVCRPRR). A compositionally biased stretch (low complexity) spans 108–123 (SSSSNTSSGTATSGES). The span at 126–141 (ADWRDSSSASDDDRIP) shows a compositional bias: basic and acidic residues.

This is an uncharacterized protein from Aotus trivirgatus (Three-striped night monkey).